The following is a 162-amino-acid chain: Ribosome-binding factor A (162 aa).

The segment at 124–162 (ARVRSGAKPAGEADPYRESGSGVEPGRDGSIGDDDQPEY) is disordered.

It belongs to the RbfA family. In terms of assembly, monomer. Binds 30S ribosomal subunits, but not 50S ribosomal subunits or 70S ribosomes.

The protein localises to the cytoplasm. Functionally, one of several proteins that assist in the late maturation steps of the functional core of the 30S ribosomal subunit. Associates with free 30S ribosomal subunits (but not with 30S subunits that are part of 70S ribosomes or polysomes). Required for efficient processing of 16S rRNA. May interact with the 5'-terminal helix region of 16S rRNA. The sequence is that of Ribosome-binding factor A from Mycolicibacterium paratuberculosis (strain ATCC BAA-968 / K-10) (Mycobacterium paratuberculosis).